Reading from the N-terminus, the 603-residue chain is Dual specificity protein phosphatase CDC14A (603 aa).

An a region spans residues 7-162 (ELIGACEFMK…GLQHGFFDFE (156 aa)). Positions 163–176 (TFDAEEYEHYERVE) are linker. The b stretch occupies residues 177 to 343 (NGDFNWIVPG…QGDIFRSKLK (167 aa)). The Tyrosine-protein phosphatase domain maps to 179–336 (DFNWIVPGKF…KQASLWVQGD (158 aa)). Cys-278 functions as the Phosphocysteine intermediate in the catalytic mechanism. Ser-484 carries the post-translational modification Phosphoserine. Positions 518–538 (NGSTQTPGRNYPELNNNQYTR) are enriched in polar residues. The tract at residues 518–583 (NGSTQTPGRN…RPSFPGSLSS (66 aa)) is disordered. Low complexity-rich tracts occupy residues 539 to 558 (SSNSNSSSSSSGLGGNLNSS) and 573 to 583 (LRPSFPGSLSS). Ser-592 is subject to Phosphoserine.

It belongs to the protein-tyrosine phosphatase family. Non-receptor class CDC14 subfamily. As to quaternary structure, interacts with KIF20A. Interaction is required to localize CDC14 to the midzone of the mitotic spindle. In terms of tissue distribution, expressed in the inner ear.

The protein localises to the nucleus. Its subcellular location is the cytoplasm. The protein resides in the cytoskeleton. It localises to the microtubule organizing center. It is found in the centrosome. The protein localises to the spindle. Its subcellular location is the cell projection. The protein resides in the kinocilium. It localises to the spindle pole. It is found in the stereocilium. It carries out the reaction O-phospho-L-tyrosyl-[protein] + H2O = L-tyrosyl-[protein] + phosphate. The catalysed reaction is O-phospho-L-seryl-[protein] + H2O = L-seryl-[protein] + phosphate. The enzyme catalyses O-phospho-L-threonyl-[protein] + H2O = L-threonyl-[protein] + phosphate. In terms of biological role, dual-specificity phosphatase. Required for centrosome separation and productive cytokinesis during cell division. Dephosphorylates SIRT2 around early anaphase. May dephosphorylate the APC subunit FZR1/CDH1, thereby promoting APC-FZR1 dependent degradation of mitotic cyclins and subsequent exit from mitosis. Required for normal hearing. The chain is Dual specificity protein phosphatase CDC14A (Cdc14a) from Mus musculus (Mouse).